A 492-amino-acid chain; its full sequence is Prostaglandin E2 receptor EP4 subtype (492 aa).

Residues 1-19 (MSIPGTNASSSQASNPLNS) are Extracellular-facing. Asn7 carries N-linked (GlcNAc...) asparagine glycosylation. Residues 20 to 43 (PVTIPAVMFIFGVVGNLVAIVVLC) traverse the membrane as a helical segment. Topologically, residues 44–55 (KSRKEQKETTFY) are cytoplasmic. Residues 56 to 79 (TLVCGLAVTDLLGTLLVSPVTIAT) form a helical membrane-spanning segment. Residues 80-96 (YLKGQWPGGHALCEYST) lie on the Extracellular side of the membrane. An intrachain disulfide couples Cys92 to Cys170. Residues 97-115 (FILLFFGLSGLSIICAMSI) traverse the membrane as a helical segment. At 116-135 (ERYLAINHAYFYSHYVDKRL) the chain is on the cytoplasmic side. Residues 136–160 (AGLTLFAVYASNVLFCALPSMGLGS) form a helical membrane-spanning segment. The Extracellular segment spans residues 161–184 (SRLQYPATWCFIDWTTNVTAHAAF). The helical transmembrane segment at 185–211 (SYMYAGFSSFLILATVLCNVLVCGALL) threads the bilayer. Over 212–273 (RMHRQFMRRT…RSFRRIAGAE (62 aa)) the chain is Cytoplasmic. Residues 274–301 (IQMVILLIATSLVVLICSIPLVVRVFVN) traverse the membrane as a helical segment. The Extracellular portion of the chain corresponds to 302–318 (QLYRPQLEPVIGKNPDL). Residues 319–338 (QAIRIASVSPILDPWIYILL) form a helical membrane-spanning segment. Over 339–492 (RKTVLSKAIE…ETLNLSEKCI (154 aa)) the chain is Cytoplasmic. Over residues 361-374 (RRERSGPHCSDSRR) the composition is skewed to basic and acidic residues. The interval 361-383 (RRERSGPHCSDSRRTSSAVSGHS) is disordered. A phosphoserine mark is found at Ser380, Ser383, Ser385, and Ser388.

It belongs to the G-protein coupled receptor 1 family. As to quaternary structure, interacts with FEM1A. Post-translationally, phosphorylation mediates agonist-mediated desensitization by promoting cytoplasmic retention.

Its subcellular location is the cell membrane. Receptor for prostaglandin E2 (PGE2). The activity of this receptor is mediated by G(s) proteins that stimulate adenylate cyclase. Has a relaxing effect on smooth muscle. May play an important role in regulating renal hemodynamics, intestinal epithelial transport, adrenal aldosterone secretion, and uterine function. In Bos taurus (Bovine), this protein is Prostaglandin E2 receptor EP4 subtype (PTGER4).